The chain runs to 169 residues: Probable NADH dehydrogenase [ubiquinone] 1 alpha subcomplex subunit 5, mitochondrial (169 aa).

Residues 1-11 constitute a mitochondrion transit peptide; that stretch reads MFLRAIGRPLL.

It belongs to the complex I NDUFA5 subunit family. In terms of assembly, complex I is composed of at least 49 different subunits.

Its subcellular location is the mitochondrion inner membrane. Functionally, accessory subunit of the mitochondrial membrane respiratory chain NADH dehydrogenase (Complex I), that is believed not to be involved in catalysis. Complex I functions in the transfer of electrons from NADH to the respiratory chain. The immediate electron acceptor for the enzyme is believed to be ubiquinone. In Arabidopsis thaliana (Mouse-ear cress), this protein is Probable NADH dehydrogenase [ubiquinone] 1 alpha subcomplex subunit 5, mitochondrial.